We begin with the raw amino-acid sequence, 60 residues long: Large ribosomal subunit protein bL32 (60 aa).

Belongs to the bacterial ribosomal protein bL32 family.

In Thermotoga maritima (strain ATCC 43589 / DSM 3109 / JCM 10099 / NBRC 100826 / MSB8), this protein is Large ribosomal subunit protein bL32 (rpmF).